A 425-amino-acid polypeptide reads, in one-letter code: MKTPSQTHVLGLAHPPLPMVRLAFIGLGNRGVLTLQRYLQIEGVEIKALCEIREGNLVKAQKILREAGYPQPDGYTGPDGWKRMCERDDIDLVFICTDWLTHTPMAVYSMEHGKHVAIEVPAAMTVEECWKLVDTAEKTRQHCMMLENCCYDPFALTTLNMAQQGVFGEITHVEGAYIHDLRSIYFADESKGGFHNHWGKKYSIEHTGNPYPTHGLGPVCQILNIHRGDRMNYLVSLSSLQAGMTEYARKNFGADSPEARQKYLLGDMNTTLIQTVKGKSIMIQYNVVTPRPYSRLHTVCGTKGFAQKYPVPSIALEPDAGSPLEGKALEEIMERYKHPFTATFGTEAHRRNLPNEMNYVMDCRLIYCLRNGLPLDMDVYDAAEWSCITELSEQSVLNGSIPVEIPDFTRGAWKKCHISRTSDLY.

Residues 29–30 (NR), Glu51, 99–102 (WLTH), 119–120 (EV), and Asn148 contribute to the NAD(+) site. Position 177 (Tyr177) interacts with substrate. NAD(+) contacts are provided by residues 194-198 (FHNHW) and Tyr211. Substrate contacts are provided by residues 211–214 (YPTH) and Tyr293.

The protein belongs to the Gfo/Idh/MocA family. Glycosyl hydrolase 109 subfamily. It depends on NAD(+) as a cofactor.

The catalysed reaction is Cleavage of non-reducing alpha-(1-&gt;3)-N-acetylgalactosamine residues from human blood group A and AB mucin glycoproteins, Forssman hapten and blood group A lacto series glycolipids.. Functionally, glycosidase that has specific alpha-N-acetylgalactosaminidase activity. This chain is Alpha-N-acetylgalactosaminidase, found in Bacteroides fragilis (strain ATCC 25285 / DSM 2151 / CCUG 4856 / JCM 11019 / LMG 10263 / NCTC 9343 / Onslow / VPI 2553 / EN-2).